We begin with the raw amino-acid sequence, 284 residues long: Tropomyosin (284 aa).

M1 is subject to N-acetylmethionine. Disordered stretches follow at residues 1–49 (MDAI…NQKK) and 103–126 (EERL…SERM). A coiled-coil region spans residues 1 to 284 (MDAIKKKMQA…DQAFSELSGF (284 aa)). The span at 12 to 45 (KLEKDNAMDKADTLEQQNKEANLRAEKTEEEIRA) shows a compositional bias: basic and acidic residues.

This sequence belongs to the tropomyosin family. Homodimer. Expressed in leg muscle and chest protection muscle (at protein level).

Tropomyosin, in association with the troponin complex, plays a central role in the calcium dependent regulation of muscle contraction. This is Tropomyosin from Chionoecetes opilio (Atlantic snow crab).